The primary structure comprises 3085 residues: MATMMHFGQFPSNIPLRAATCCTKVHSTLVTKEMMASSVKPAESSSVARPIIYSSAATDGYEKAQRAFEASFREKYSGKLEAMKYGKMVKKGGLTYVKRAGPQAIAKGIEMDAAIEKFNTAFNAGELENVTLEGDITAGISVARGESVWLRSVFWSRSLKKQARKKTPKLVAKSDFDDLFNKVLKVASLGNIPVEIVGKKANKILRCGYRRVNTSTIPYFHLPHHNSNYICRELHPQRVRWLVPLLVRHRKIRDQFSDSMIARGWSGLILPKYIASTCGRRYDEVIVRGRLYGRVEDARTKLPAGDVGRTMHYSSGEERFFAGWKEGFEKLVPAQKEHICKIVQDNKFCGKLAASIVQIAFPCHKMACDVCRNKFNEMTPEAYSELIDKHIDQRMNEINEAIVRFPGLKQVVSNFRSKHIASTNIKDNLEVAKLTQGHKANQMMQLARINSILIKGNTATPSEISDASGLLLEITRWFNNHLSVIDKGSLRAFRNKRSSKALVNPSLLCDNQRDKNGNFIWGERGYHSKRFFASHFDEVTPGDGYKEYIIRKGPQGQRKLAIGNLIVSFDLEKTRQALKGEEVEKLPLSNSCVSKRNGNYVYTSCCVTLDDGTPLYSNIKNPTKRHLVVGTTGDPKIVDLPATDTDKMYIAKEGYCYLNIFLAMLINVNENEAKAFTKMVRDIIIPMLGTWPTMQDLATACFMMTAFFPETSSAELPRILVDHTNQTMHVIDSFGSLTTGYHVLKAGTAAQLIDFASTELEGEMKWYRVGGHGLPVKEKMISALITSIFRPKKLVYLIEEDPYVLIMAMCSPRLIISLFNNGALELAAKHWISRDKNVSAIFAMLMDLSTEMSKAELLIEQHRMINECAKRVHDTQNYLDEVGPHQQEVRTFLALISDELEADKELHKTGFANFSERFHSLTEKMYVDALEEEWRGLSLLDRFSYATFVYKHKPRSTSVLPPKKSEDIDAKFVISPSWFVGKTKEHLSGGRKYVTSQITQFTSYIKRATLDRAMRIMCSCLKDLAYFMNVALVTHLLISMIAAVYNMLNDHRIAKRRLYILEMQETNTAIWHLYDTWKTVNQRDPTHEEFRKYVAKVNKNLLRHLPEEEDKAEVEYQANKVYEKKLEKAVALMALFTMIFDTEKSGAVFSILRNIKSVFSTLGEEVKYQSLDEIQSIEDEKKLTIDFDLDTEITAEHTTMDVQFEKWWDKQLSQNRVVPHYRVGGTFIEFTRHTAASVCNTICASSEQEFVVRGAVGSGKSTGLPSHLSRKGRVLLLEPTRPLAENVCKQLRKEPFHLSPTLRMRGLTTFGSSNISVMTSGYALHFHANNPQRLEEFDFIMIDESHTMDSSTMAFYCLLREYEFKGKILKVSATPPGRECEFKTQHDVLIKIEESLSYNSFVTAQGTGSNADVVQNGDNILVYVPSYNDVDQLSKGLMEKGHLVTKVDGRTMKMGNVEIPTKGTSSKKHFIVATNIIENGVTLDIDVVVDFGLKVVAELDSDSRCMRYKKVSISYGERLQRLGRVGRVKQGTALRIGHTETGMTEIPVAIATEAAFICFAYNLPVMTHNVTSSLLSRCTNRQARTMMQYELSPFFMVELVHFNGCVHPQIESKLKAYKLRDSETQLSTLAIPNSGTSRWKTVGEYKKLGVRIEADDNVRVPFAANGVPDRLYADLWETIQQHKSDAGFGRLTSACASKISYTLTTQPNAIPRTLAIIEHLLREEQQKKAYFESLNDTLCATSFSLAGMVNNIRRRYLKDHSAHNINVLQNAKSQLNEFNSKAIDPERVGDIMGYGVLDTVQYQSATDVQKRLKLKGRWNGSLAATDLLIAGAVFAGGCWMLWEYTKSGNEIVQYQGKRRQMQKLKFRNARDNKVGREVYGDDGTIEHFFGAAYTERGKRKGNNSTKGMGTKTRRFVHMYGFDPTEYSFVRFVDPLTGYSKDESVQTDISLVQSEIGEYRQKCMEDDDELIDFIKQKPGIQAYFMKNGSDKALQVDLTPHIPLLSCAKTATIAGFPERESELRQTGTPIVVNKNVVPGEHKEVVREEGKSIVKGLRNYNPISSVVCRLTNDSNGNAQTLYGVGFGPLIITNSHLFKMNNGTLFVRSHQGEFTVQNTTQLQIYHVKDKDMILIRMPKDFPPFPMKLKFRAPHSEERACLVGSRFQQKSLSSEVSDSTLIRPTDSGSGYWKHWVSTKEGDCGLPMVALKDGSLIGIHGLTSVRSELNYFVPFTDDFQSKYLSNIESLEWVKHWRHTPDKVAWNGMTLRENGPASEFSVSKLIADLTHGYVDEVVEQGYSSKWVANRLDGNLKAVASSSSQLVTKHVVKGPCVLFQEFLATHEEAARYFVPRMGEYGPSRLNKEAFLKDFLKYAGPITVGVVNTNSFEDAVASVINMLEDLDYGECAYVTDPDSIFDSLNMKAAVGALYKGKKKEYFEQLNTTEREDLLRLSCERLYEGKMGVWNGSLKAELRPKEKLEQNKTRTFTAAPIDTLLGGKVCVDDFNNRFYSLNLKGPWSVGMTKFYGGWNELLQKLPDGWIYCDADGSQFDSSLTPYLINAVVQIREHFMEDWEIGRTMLRNFYTEIVYTPILTPDGTIVKKFKGNNSGQPSTVVDNTLMVILAMHYAMHQQCWKEEEMKEKIRFFANGDDLLIAIYPSKEKFLNVLSEYFHELGLKYDFSSRSTVRETLWFMSHRGLYLDDMYIPKLEEERIVSILEWDRSNEATHRAEAICAAMIEAWGYPELLKYIREFYLWMMQHECYRDLVRDGKLPYIAETALRKLYTDKSVDENELVKYWKALAPEEDDGPDIVTYQGDEKPSKSSQPQSSSPQVPQQVDAGASSQGRDKQSVIKHDSTKSKDVGQSSTAVPRLKQISKMRMPVSKGRQVLALDHLLDYKPEQVDLSNTRATKEQFDNWYEAVMREYDVSDSQMGVIMNGLMVWCIENGTSPNLSGDWVMMDGEEQVSFPLKPIVENAKPSFRQIMHHFSDAAEAYIEMRNRERPYMPRYGAQRNLRDKTLARYAFDFYEVTSRTTDRAREAHFQMKAAALASVSNKLFGLDGSVATTSEDTERHTATDVNAHMHHMMGVRQG.

Residues 170–313 (LVAKSDFDDL…AGDVGRTMHY (144 aa)) enclose the Peptidase S30 domain. Active-site for P1 proteinase activity residues include histidine 224, glutamate 233, and serine 266. An Involved in interaction with stylet and aphid transmission motif is present at residues 365 to 368 (KMAC). The Involved in virions binding and aphid transmission motif lies at 622 to 624 (PTK). The region spanning 648 to 770 (MYIAKEGYCY…EGEMKWYRVG (123 aa)) is the Peptidase C6 domain. Residues cysteine 656 and histidine 729 each act as for helper component proteinase activity in the active site. The Helicase ATP-binding domain occupies 1241 to 1393 (TICASSEQEF…TQHDVLIKIE (153 aa)). Residue 1254–1261 (GAVGSGKS) coordinates ATP. The DESH box motif lies at 1343-1346 (DESH). In terms of domain architecture, Helicase C-terminal spans 1412 to 1571 (DVVQNGDNIL…NLPVMTHNVT (160 aa)). Residues 1895–1904 (ERGKRKGNNS) carry the Nuclear localization signal motif. Tyrosine 1919 bears the O-(5'-phospho-RNA)-tyrosine mark. A Peptidase C4 domain is found at 2047-2266 (GKSIVKGLRN…VAWNGMTLRE (220 aa)). Residues histidine 2092, aspartate 2127, and cysteine 2198 each act as for nuclear inclusion protein A activity in the active site. The 125-residue stretch at 2535–2659 (WIYCDADGSQ…AIYPSKEKFL (125 aa)) folds into the RdRp catalytic domain. The interval 2801–2869 (DGPDIVTYQG…STAVPRLKQI (69 aa)) is disordered. Over residues 2816–2831 (KSSQPQSSSPQVPQQV) the composition is skewed to low complexity. Residues 2839 to 2855 (GRDKQSVIKHDSTKSKD) show a composition bias toward basic and acidic residues. At threonine 3068 the chain carries Phosphothreonine.

This sequence belongs to the potyviridae genome polyprotein family. As to quaternary structure, interacts with host eIF4E protein (via cap-binding region); this interaction mediates the translation of the VPg-viral RNA conjugates. Part of a complex that comprises VPg, RNA, host EIF4E and EIF4G; this interaction mediates the translation of the VPg-viral RNA conjugates. Post-translationally, VPg is uridylylated by the polymerase and is covalently attached to the 5'-end of the genomic RNA. This uridylylated form acts as a nucleotide-peptide primer for the polymerase. Potyviral RNA is expressed as two polyproteins which undergo post-translational proteolytic processing. Genome polyprotein is processed by NIa-pro, P1 and HC-pro proteinases resulting in the production of at least ten individual proteins. P3N-PIPO polyprotein is cleaved by P1 and HC-pro proteinases resulting in the production of three individual proteins. The P1 proteinase and the HC-pro cleave only their respective C-termini autocatalytically. 6K1 is essential for proper proteolytic separation of P3 from CI.

The protein resides in the host cytoplasmic vesicle. Its subcellular location is the host nucleus. It is found in the virion. The catalysed reaction is RNA(n) + a ribonucleoside 5'-triphosphate = RNA(n+1) + diphosphate. It catalyses the reaction Hydrolyzes glutaminyl bonds, and activity is further restricted by preferences for the amino acids in P6 - P1' that vary with the species of potyvirus, e.g. Glu-Xaa-Xaa-Tyr-Xaa-Gln-|-(Ser or Gly) for the enzyme from tobacco etch virus. The natural substrate is the viral polyprotein, but other proteins and oligopeptides containing the appropriate consensus sequence are also cleaved.. It carries out the reaction Hydrolyzes a Gly-|-Gly bond at its own C-terminus, commonly in the sequence -Tyr-Xaa-Val-Gly-|-Gly, in the processing of the potyviral polyprotein.. Required for aphid transmission and also has proteolytic activity. Only cleaves a Gly-Gly dipeptide at its own C-terminus. Interacts with virions and aphid stylets. Acts as a suppressor of RNA-mediated gene silencing, also known as post-transcriptional gene silencing (PTGS), a mechanism of plant viral defense that limits the accumulation of viral RNAs. May have RNA-binding activity. Its function is as follows. Has helicase activity. It may be involved in replication. Functionally, indispensable for virus replication. Reduces the abundance of host transcripts related to jasmonic acid biosynthesis therefore altering the host defenses. In order to increase its own stability, decreases host protein degradation pathways. In terms of biological role, indispensable for virus replication. Mediates the cap-independent, EIF4E-dependent translation of viral genomic RNAs. Binds to the cap-binding site of host EIF4E and thus interferes with the host EIF4E-dependent mRNA export and translation. VPg-RNA directly binds EIF4E and is a template for transcription. Also forms trimeric complexes with EIF4E-EIF4G, which are templates for translation. Its function is as follows. Has RNA-binding and proteolytic activities. Functionally, an RNA-dependent RNA polymerase that plays an essential role in the virus replication. In terms of biological role, involved in aphid transmission, cell-to-cell and systemis movement, encapsidation of the viral RNA and in the regulation of viral RNA amplification. The chain is Genome polyprotein from Beet mosaic virus (BtMV).